The following is a 655-amino-acid chain: Golgi integral membrane protein 4 (655 aa).

A lipid anchor (N-myristoyl glycine) is attached at glycine 2. Topologically, residues glycine 2 to arginine 12 are cytoplasmic. Residues isoleucine 13 to tyrosine 33 form a helical; Signal-anchor for type II membrane protein membrane-spanning segment. Topologically, residues leucine 34 to methionine 655 are lumenal. The tract at residues threonine 38–serine 107 is golgi targeting. The stretch at glutamate 66–isoleucine 216 forms a coiled coil. Residues leucine 80–valine 175 are endosome targeting. Positions lysine 122–aspartate 145 are disordered. A compositionally biased stretch (basic and acidic residues) spans serine 123 to aspartate 145. The segment at tyrosine 176–arginine 220 is golgi targeting. Asparagine 229 is a glycosylation site (N-linked (GlcNAc...) asparagine). Disordered stretches follow at residues glutamine 256–glutamine 275 and glutamate 285–methionine 655. 4 stretches are compositionally biased toward basic and acidic residues: residues alanine 261–proline 270, glutamate 290–leucine 307, glutamate 319–serine 328, and leucine 348–threonine 360. A Phosphoserine modification is found at serine 328. Residues lysine 361–tyrosine 370 show a composition bias toward polar residues. Positions alanine 381–histidine 398 are enriched in basic and acidic residues. Low complexity-rich tracts occupy residues glutamine 399–glutamine 423 and glutamine 433–glutamine 442. Residues alanine 468–valine 508 are compositionally biased toward basic and acidic residues. Position 540 is a phosphoserine (serine 540). Residues glutamine 567 to threonine 589 show a composition bias toward acidic residues. Tyrosine 576 carries the post-translational modification Phosphotyrosine. A Phosphothreonine modification is found at threonine 589. Residues glutamate 590–valine 620 are compositionally biased toward basic and acidic residues. A Phosphotyrosine modification is found at tyrosine 633. Positions tyrosine 633–glycine 642 are enriched in acidic residues.

The protein belongs to the GOLIM4 family. In terms of processing, phosphorylated by c-AMP-dependent kinases most probably in its lumenal part. Post-translationally, O-glycosylated; modified by sialic acid residues. N-glycosylated; N-glycans are of the complex type and modified by sialic acid residues. Expressed by spermatozoa (at protein level).

Its subcellular location is the golgi apparatus. The protein localises to the golgi stack membrane. It localises to the endosome membrane. The protein resides in the membrane. Plays a role in endosome to Golgi protein trafficking; mediates protein transport along the late endosome-bypass pathway from the early endosome to the Golgi. The chain is Golgi integral membrane protein 4 (Golim4) from Mus musculus (Mouse).